The chain runs to 390 residues: Succinyl-diaminopimelate desuccinylase (390 aa).

Residue histidine 74 participates in Zn(2+) binding. Aspartate 76 is a catalytic residue. Aspartate 107 provides a ligand contact to Zn(2+). Glutamate 140 acts as the Proton acceptor in catalysis. The Zn(2+) site is built by glutamate 141, glutamate 169, and histidine 363.

This sequence belongs to the peptidase M20A family. DapE subfamily. As to quaternary structure, homodimer. It depends on Zn(2+) as a cofactor. Co(2+) serves as cofactor.

The catalysed reaction is N-succinyl-(2S,6S)-2,6-diaminopimelate + H2O = (2S,6S)-2,6-diaminopimelate + succinate. It participates in amino-acid biosynthesis; L-lysine biosynthesis via DAP pathway; LL-2,6-diaminopimelate from (S)-tetrahydrodipicolinate (succinylase route): step 3/3. Catalyzes the hydrolysis of N-succinyl-L,L-diaminopimelic acid (SDAP), forming succinate and LL-2,6-diaminopimelate (DAP), an intermediate involved in the bacterial biosynthesis of lysine and meso-diaminopimelic acid, an essential component of bacterial cell walls. The protein is Succinyl-diaminopimelate desuccinylase of Bartonella bacilliformis (strain ATCC 35685 / KC583 / Herrer 020/F12,63).